The following is a 69-amino-acid chain: Conopeptide Y-Fe1 (69 aa).

An N-terminal signal peptide occupies residues 1–20 (MSKLGVVLFVFLLLLPLAAP). The propeptide occupies 21-69 (QPVGDQPADQPADRNAEARGTYLYPFSYYRLWRYFTRFLHKQPYYYVHI).

The protein belongs to the conotoxin M superfamily. Conopeptide Y family. Expressed by the venom duct.

The protein localises to the secreted. Tyrosine-rich conopeptide that specifically targets voltage-gated potassium channel Kv1.6/KCNA6 (IC(50) is 8.8 uM) that is expressed in Xenopus oocytes. In vivo, causes seizures (at 5 nmol) and death (20 nmol) when intracranially injected into mice, and causes paralysis (at 10 pmol) to C.elegans. The sequence is that of Conopeptide Y-Fe1 from Conus ferrugineus (Cone snail).